The chain runs to 58 residues: ATP synthase F(0) complex subunit k, mitochondrial (58 aa).

Lys-16 and Lys-17 each carry N6-acetyllysine. A helical transmembrane segment spans residues 23-45 (TLTGRMNCVLATYGGIALLVLYF).

As to quaternary structure, component of the ATP synthase complex composed at least of ATP5F1A/subunit alpha, ATP5F1B/subunit beta, ATP5MC1/subunit c (homooctomer), MT-ATP6/subunit a, MT-ATP8/subunit 8, ATP5ME/subunit e, ATP5MF/subunit f, ATP5MG/subunit g, ATP5MK/subunit k, ATP5MJ/subunit j, ATP5F1C/subunit gamma, ATP5F1D/subunit delta, ATP5F1E/subunit epsilon, ATP5PF/subunit F6, ATP5PB/subunit b, ATP5PD/subunit d, ATP5PO/subunit OSCP. ATP synthase complex consists of a soluble F(1) head domain (subunits alpha(3) and beta(3)) - the catalytic core - and a membrane F(0) domain - the membrane proton channel (subunits c, a, 8, e, f, g, k and j). These two domains are linked by a central stalk (subunits gamma, delta, and epsilon) rotating inside the F1 region and a stationary peripheral stalk (subunits F6, b, d, and OSCP). The ATP synthase complex/complex V exists as a monomeric and a dimeric supercomplex that helps shape mitochondrial cristae to optimize proton flow.

It is found in the mitochondrion membrane. Subunit k, of the mitochondrial membrane ATP synthase complex (F(1)F(0) ATP synthase or Complex V) that produces ATP from ADP in the presence of a proton gradient across the membrane which is generated by electron transport complexes of the respiratory chain. ATP synthase complex consist of a soluble F(1) head domain - the catalytic core - and a membrane F(1) domain - the membrane proton channel. These two domains are linked by a central stalk rotating inside the F(1) region and a stationary peripheral stalk. During catalysis, ATP synthesis in the catalytic domain of F(1) is coupled via a rotary mechanism of the central stalk subunits to proton translocation. In vivo, can only synthesize ATP although its ATP hydrolase activity can be activated artificially in vitro. Part of the complex F(0) domain. Required for dimerization of the ATP synthase complex and as such regulates ATP synthesis in the mitochondria. This chain is ATP synthase F(0) complex subunit k, mitochondrial, found in Mus musculus (Mouse).